The sequence spans 457 residues: Proline-specific permease ProY (457 aa).

The Cytoplasmic portion of the chain corresponds to 1–17 (MESKNKLKRGLSTRHIR). 2 consecutive transmembrane segments (helical) span residues 18-38 (FMAL…DAIK) and 39-59 (MAGP…YIIM). The Cytoplasmic portion of the chain corresponds to 60-84 (RALGEMSVHNPAASSFSRYAQENLG). A helical membrane pass occupies residues 85 to 105 (PLAGYITGWTYCFEILIVAIA). The Periplasmic portion of the chain corresponds to 106–113 (DVTAFGIY). A helical transmembrane segment spans residues 114–134 (MGVWFPTVPHWIWVLSVVLII). Residues 135 to 156 (CAVNLMSVKVFGELEFWFSFFK) lie on the Cytoplasmic side of the membrane. Residues 157 to 177 (VATIIIMIVAGFGIIIWGIGN) traverse the membrane as a helical segment. At 178–197 (GGQPTGIHNLWSNGGFFSNG) the chain is on the periplasmic side. Residues 198-218 (WLGMVMSLQMVMFAYGGIEII) form a helical membrane-spanning segment. Over 219-242 (GITAGEAKDPEKSIPRAINSVPMR) the chain is Cytoplasmic. Residues 243-263 (ILVFYVGTLFVIMSIYPWNQV) traverse the membrane as a helical segment. Residues 264–277 (GTAGSPFVLTFQHM) lie on the Periplasmic side of the membrane. Residues 278 to 298 (GITFAASILNFVVLTASLSAI) form a helical membrane-spanning segment. Residues 299-331 (NSDVFGVGRMLHGMAEQGSAPKIFSKTSRRGIP) are Cytoplasmic-facing. A helical membrane pass occupies residues 332–352 (WVTVLVMTTALLFAVYLNYIM). The Periplasmic portion of the chain corresponds to 353–355 (PEN). The chain crosses the membrane as a helical span at residues 356-376 (VFLVIASLATFATVWVWIMIL). Residues 377-399 (LSQIAFRRRLPPEEVKALKFKVP) are Cytoplasmic-facing. A helical transmembrane segment spans residues 400–420 (GGVATTIGGLIFLLFIIGLIG). Over 421–424 (YHPD) the chain is Periplasmic. A helical membrane pass occupies residues 425–445 (TRISLYVGFAWIVVLLIGWMF). Topologically, residues 446–457 (KRRHDRQLAENQ) are cytoplasmic.

This sequence belongs to the amino acid-polyamine-organocation (APC) superfamily. Amino acid transporter (AAT) (TC 2.A.3.1) family.

The protein resides in the cell inner membrane. Permease that is involved in the transport across the cytoplasmic membrane of proline. This Escherichia coli O157:H7 protein is Proline-specific permease ProY (proY).